The chain runs to 457 residues: Argininosuccinate lyase (457 aa).

The protein belongs to the lyase 1 family. Argininosuccinate lyase subfamily.

Its subcellular location is the cytoplasm. It catalyses the reaction 2-(N(omega)-L-arginino)succinate = fumarate + L-arginine. It functions in the pathway amino-acid biosynthesis; L-arginine biosynthesis; L-arginine from L-ornithine and carbamoyl phosphate: step 3/3. The chain is Argininosuccinate lyase from Bacillus pumilus (strain SAFR-032).